A 123-amino-acid chain; its full sequence is Small ribosomal subunit protein uS13 (123 aa).

The disordered stretch occupies residues 95–123; it reads GLPVRGQKTKTNARTRKGPKRTVGRKKKK. Over residues 101–123 the composition is skewed to basic residues; that stretch reads QKTKTNARTRKGPKRTVGRKKKK.

Belongs to the universal ribosomal protein uS13 family. In terms of assembly, part of the 30S ribosomal subunit. Forms a loose heterodimer with protein S19. Forms two bridges to the 50S subunit in the 70S ribosome.

Its function is as follows. Located at the top of the head of the 30S subunit, it contacts several helices of the 16S rRNA. In the 70S ribosome it contacts the 23S rRNA (bridge B1a) and protein L5 of the 50S subunit (bridge B1b), connecting the 2 subunits; these bridges are implicated in subunit movement. Contacts the tRNAs in the A and P-sites. In Alkaliphilus metalliredigens (strain QYMF), this protein is Small ribosomal subunit protein uS13.